Here is a 562-residue protein sequence, read N- to C-terminus: Extracellular matrix protein 1 (562 aa).

The first 19 residues, 1–19 (MGTIRSSALILACLALASA), serve as a signal peptide directing secretion. 2 disordered regions span residues 46–87 (GYAA…SSPE) and 119–171 (QKEQ…WNPA). Residues 129 to 154 (IEQKEIDPPVQHQEEIVQSRQKEEKP) are compositionally biased toward basic and acidic residues. 2 tandem repeats follow at residues 172-301 (RHCQ…RPDY) and 305-427 (PCPI…YPNY). Residues 172–427 (RHCQQGRRGI…FAHLAPYPNY (256 aa)) are 2 X approximate repeats. N-linked (GlcNAc...) asparagine glycosylation is found at N376, N466, and N538. Residues 539 to 562 (ATGLGQQGPTGGTNVGPAPGSKEE) are disordered. The segment covering 543 to 552 (GQQGPTGGTN) has biased composition (gly residues). S559 carries the post-translational modification Phosphoserine.

As to quaternary structure, interacts (via C-terminus) with HSPG2 (via C-terminus). Interacts with EFEMP1/FBLN3 and LAMB3. Interacts with MMP9.

Its subcellular location is the secreted. The protein resides in the extracellular space. The protein localises to the extracellular matrix. Functionally, involved in endochondral bone formation as negative regulator of bone mineralization. Stimulates the proliferation of endothelial cells and promotes angiogenesis. Inhibits MMP9 proteolytic activity. The protein is Extracellular matrix protein 1 (Ecm1) of Rattus norvegicus (Rat).